The chain runs to 232 residues: LexA repressor (232 aa).

A disordered region spans residues 1 to 25 (MSDDSSDSTDAPGTSRSRDSGLTER). Basic and acidic residues predominate over residues 16-25 (RSRDSGLTER). A DNA-binding region (H-T-H motif) is located at residues 46–66 (IREIGDAVGLTSTSSVAHQLR). Active-site for autocatalytic cleavage activity residues include Ser-156 and Lys-193.

This sequence belongs to the peptidase S24 family. In terms of assembly, homodimer.

It carries out the reaction Hydrolysis of Ala-|-Gly bond in repressor LexA.. Functionally, represses a number of genes involved in the response to DNA damage (SOS response), including recA and lexA. In the presence of single-stranded DNA, RecA interacts with LexA causing an autocatalytic cleavage which disrupts the DNA-binding part of LexA, leading to derepression of the SOS regulon and eventually DNA repair. The polypeptide is LexA repressor (Mycolicibacterium gilvum (strain PYR-GCK) (Mycobacterium gilvum (strain PYR-GCK))).